The primary structure comprises 108 residues: UPF0060 membrane protein YnfA (108 aa).

The Periplasmic segment spans residues 1-5; the sequence is MIKTT. The chain crosses the membrane as a helical span at residues 6–26; it reads LLFFATALCEIIGCFLPWLWL. Residues 27–30 lie on the Cytoplasmic side of the membrane; that stretch reads KRNA. A helical transmembrane segment spans residues 31-51; the sequence is SIWLLLPAGISLALFVWLLTL. Residues 52 to 60 are Periplasmic-facing; that stretch reads HPAASGRIY. A helical transmembrane segment spans residues 61–81; it reads AAYGGVYVCTALMWLRVVDGV. Topologically, residues 82 to 84 are cytoplasmic; that stretch reads KLT. Residues 85–105 traverse the membrane as a helical segment; it reads LYDWTGALIALCGMLIIVAGW. Residues 106-108 lie on the Periplasmic side of the membrane; the sequence is GRT.

It belongs to the UPF0060 family.

Its subcellular location is the cell inner membrane. The sequence is that of UPF0060 membrane protein YnfA from Shigella dysenteriae serotype 1 (strain Sd197).